The following is a 1288-amino-acid chain: Vacuolating cytotoxin autotransporter (1288 aa).

A signal peptide spans 1–33 (MEIQQTHRKINRPLVSLVLAGALISAIPQESHA). The segment at 326–377 (PPEGGYKDKPNSTTSQSGTKNDKKEISQNNNSNTEVINPPNNTQKTETEPTQ) is disordered. The segment covering 352-376 (SQNNNSNTEVINPPNNTQKTETEPT) has biased composition (polar residues). An Autotransporter domain is found at 1015 to 1288 (KYEKPTNVWA…ASNLGMRYSF (274 aa)).

Its subcellular location is the periplasm. It is found in the secreted. The protein resides in the cell surface. The protein localises to the cell outer membrane. Its function is as follows. Induces vacuolation of eukaryotic cells. Causes ulceration and gastric lesions. The chain is Vacuolating cytotoxin autotransporter (vacA) from Helicobacter pylori (strain J99 / ATCC 700824) (Campylobacter pylori J99).